We begin with the raw amino-acid sequence, 445 residues long: MDIRQVRETVEMIEEQHFDIRTITMGISLLDCVDSDIDRAAAKIYQKITTKAANLVAVGDDIAAELGIPIVNKRVSVTPIALIGAATDAEDYLPLAKALDQAACDIGVDFIGGFSALVQKGYQKGDKILIESIPQALAQTKKVCASVNVGSTRSGINMTAVADMGRIIKETAKASEMGAAKLVVFANAVEDNPFMAGAFHGVGEADTVINVGVSGPGVVKRALEKVRGESFDVLAETVKKTAFKITRIGQLVGQMASERLGVGFGVVDLSLAPTPAVGDSVARVLEEMGLEMVGTHGTTAALALLNDAVKKGGVMACNRVGGLSGAFIPVSEDEGMIAAVQGGSLNLEKLEAMTAICSVGLDMIAIPEETPSETIAAMIADEAAIGVINQKTTAVRIIPKGKEGDMIAFGGLLGTAPVMAVNPHSSADFIARGGQIPAPIHSFKN.

Belongs to the UPF0210 family. In terms of assembly, homodimer.

In Streptococcus equi subsp. zooepidemicus (strain MGCS10565), this protein is UPF0210 protein Sez_0396.